Here is a 146-residue protein sequence, read N- to C-terminus: 3-hydroxyacyl-[acyl-carrier-protein] dehydratase FabZ (146 aa).

Histidine 48 is an active-site residue.

This sequence belongs to the thioester dehydratase family. FabZ subfamily.

The protein resides in the cytoplasm. It carries out the reaction a (3R)-hydroxyacyl-[ACP] = a (2E)-enoyl-[ACP] + H2O. In terms of biological role, involved in unsaturated fatty acids biosynthesis. Catalyzes the dehydration of short chain beta-hydroxyacyl-ACPs and long chain saturated and unsaturated beta-hydroxyacyl-ACPs. This chain is 3-hydroxyacyl-[acyl-carrier-protein] dehydratase FabZ, found in Campylobacter lari (strain RM2100 / D67 / ATCC BAA-1060).